Here is a 238-residue protein sequence, read N- to C-terminus: MAKKLSRRLREALEKVEDRAYEPLEALTLLKETATAKFDETAEAHIRLGIDPKYTDQQLRTTVAFPKGTGQSVRVAVITSGEQVKVAEESGADLVGSEELIEDIQKGMMDFEVLIATPDMMPKVARLGRQLGPRGLMPSPKGGTVTTDVATAIAAFKAGKQEFRADRAGIVHVLFGKSSFAAEDLLVNLKALQETIDRNRPSGAKGRYWRSIYVSASMGPSIQVDINALRDLFIEEKA.

This sequence belongs to the universal ribosomal protein uL1 family. As to quaternary structure, part of the 50S ribosomal subunit.

Functionally, binds directly to 23S rRNA. The L1 stalk is quite mobile in the ribosome, and is involved in E site tRNA release. Protein L1 is also a translational repressor protein, it controls the translation of the L11 operon by binding to its mRNA. The polypeptide is Large ribosomal subunit protein uL1 (Picosynechococcus sp. (strain ATCC 27264 / PCC 7002 / PR-6) (Agmenellum quadruplicatum)).